The chain runs to 398 residues: Putative glutamate--cysteine ligase 2 (398 aa).

Belongs to the glutamate--cysteine ligase type 2 family. YbdK subfamily.

It carries out the reaction L-cysteine + L-glutamate + ATP = gamma-L-glutamyl-L-cysteine + ADP + phosphate + H(+). ATP-dependent carboxylate-amine ligase which exhibits weak glutamate--cysteine ligase activity. This Micrococcus luteus (strain ATCC 4698 / DSM 20030 / JCM 1464 / CCM 169 / CCUG 5858 / IAM 1056 / NBRC 3333 / NCIMB 9278 / NCTC 2665 / VKM Ac-2230) (Micrococcus lysodeikticus) protein is Putative glutamate--cysteine ligase 2.